A 273-amino-acid chain; its full sequence is Orotidine 5'-phosphate decarboxylase (273 aa).

Lys-97 (proton donor) is an active-site residue.

The protein belongs to the OMP decarboxylase family. Type 2 subfamily.

The catalysed reaction is orotidine 5'-phosphate + H(+) = UMP + CO2. The protein operates within pyrimidine metabolism; UMP biosynthesis via de novo pathway; UMP from orotate: step 2/2. This chain is Orotidine 5'-phosphate decarboxylase, found in Cellvibrio japonicus (strain Ueda107) (Pseudomonas fluorescens subsp. cellulosa).